The sequence spans 210 residues: Glutathione S-transferase P (210 aa).

Residues 2 to 81 (PPYTVVYFPV…HLGRTLGLYG (80 aa)) form the GST N-terminal domain. Tyr-4 bears the Phosphotyrosine; by EGFR mark. Residues Tyr-8, Arg-14, Trp-39, Lys-45, and 52 to 53 (QL) each bind glutathione. Thr-62 bears the Phosphothreonine mark. Position 65-66 (65-66 (QS)) interacts with glutathione. The region spanning 83 to 204 (DQQEAALVDM…ASPEYVNLPI (122 aa)) is the GST C-terminal domain. An N6-succinyllysine mark is found at Lys-103 and Lys-116. An N6-acetyllysine modification is found at Lys-128. Tyr-199 carries the phosphotyrosine; by EGFR modification.

The protein belongs to the GST superfamily. Pi family. In terms of assembly, homodimer. Interacts with CDK5.

Its subcellular location is the cytoplasm. It localises to the mitochondrion. The protein localises to the nucleus. It carries out the reaction RX + glutathione = an S-substituted glutathione + a halide anion + H(+). The catalysed reaction is prostaglandin J2 + glutathione = prostaglandin J2-S-(R)-glutathione. It catalyses the reaction prostaglandin J2 + glutathione = prostaglandin J2-S-(S)-glutathione. The enzyme catalyses prostaglandin A2 + glutathione = prostaglandin A2-S-(S)-glutathione. It carries out the reaction 11(S)-hydroxy-14(S),15(S)-epoxy-(5Z,8Z,12E)-eicosatrienoate + glutathione = (11S,15S)-dihydroxy-14(R)-S-glutathionyl-(5Z,8Z,12E)-eicosatrienoate. Its function is as follows. Conjugation of reduced glutathione to a wide number of exogenous and endogenous hydrophobic electrophiles. Involved in the formation of glutathione conjugates of both prostaglandin A2 (PGA2) and prostaglandin J2 (PGJ2). Participates in the formation of novel hepoxilin regioisomers. Negatively regulates CDK5 activity via p25/p35 translocation to prevent neurodegeneration. The sequence is that of Glutathione S-transferase P from Homo sapiens (Human).